A 69-amino-acid polypeptide reads, in one-letter code: Disintegrin EC6 subunit beta (69 aa).

One can recognise a Disintegrin domain in the interval Asn-1–Lys-65. 4 disulfide bridges follow: Cys-6-Cys-29, Cys-20-Cys-26, Cys-25-Cys-50, and Cys-38-Cys-57. The Cell attachment site motif lies at Arg-42–Asp-44.

This sequence belongs to the venom metalloproteinase (M12B) family. P-II subfamily. P-IIe sub-subfamily. In terms of assembly, heterodimer with subunit alpha; disulfide-linked. Expressed by the venom gland.

Its subcellular location is the secreted. Potently inhibits adhesion of alpha-4/beta-1 (ITGA4/ITGB1) and alpha-9/beta-1 (ITGA9/ITGB1) integrins to VCAM1, and adhesion of alpha-5/beta-1 (ITGA5/ITGB1) integrin to fibronectin. Has a much less effect on alpha-IIb/beta-3 (ITGA2B/ITGB3) integrin. Also potently inhibits neutrophil migration across TNF-alpha-activated human umbilical endothelial cells. The chain is Disintegrin EC6 subunit beta from Echis carinatus sochureki (Saw-scaled viper).